A 320-amino-acid chain; its full sequence is UDP-N-acetylenolpyruvoylglucosamine reductase (320 aa).

The 167-residue stretch at 34–200 (RAGGLAEVFF…TSAVFEGFAE (167 aa)) folds into the FAD-binding PCMH-type domain. Arg-180 is a catalytic residue. The active-site Proton donor is the Ser-229. The active site involves Glu-299.

This sequence belongs to the MurB family. The cofactor is FAD.

It localises to the cytoplasm. The enzyme catalyses UDP-N-acetyl-alpha-D-muramate + NADP(+) = UDP-N-acetyl-3-O-(1-carboxyvinyl)-alpha-D-glucosamine + NADPH + H(+). The protein operates within cell wall biogenesis; peptidoglycan biosynthesis. Cell wall formation. This is UDP-N-acetylenolpyruvoylglucosamine reductase from Mesorhizobium japonicum (strain LMG 29417 / CECT 9101 / MAFF 303099) (Mesorhizobium loti (strain MAFF 303099)).